The primary structure comprises 152 residues: Lipoprotein signal peptidase (152 aa).

3 helical membrane-spanning segments follow: residues 5-25 (LFVL…FWIV), 61-81 (WFFV…LATH), and 84-104 (LNIW…GNFI). Catalysis depends on residues Asp114 and Asp130. Residues 125–145 (IFNVADSYLTVGVILLLICLW) traverse the membrane as a helical segment.

It belongs to the peptidase A8 family.

It is found in the cell membrane. It carries out the reaction Release of signal peptides from bacterial membrane prolipoproteins. Hydrolyzes -Xaa-Yaa-Zaa-|-(S,diacylglyceryl)Cys-, in which Xaa is hydrophobic (preferably Leu), and Yaa (Ala or Ser) and Zaa (Gly or Ala) have small, neutral side chains.. Its pathway is protein modification; lipoprotein biosynthesis (signal peptide cleavage). Functionally, this protein specifically catalyzes the removal of signal peptides from prolipoproteins. The sequence is that of Lipoprotein signal peptidase from Streptococcus pyogenes serotype M1.